Reading from the N-terminus, the 104-residue chain is Protein MHF2 homolog (104 aa).

Belongs to the CENP-X/MHF2 family.

Its subcellular location is the nucleus. In terms of biological role, acts in the same pathway as FANCM to restrain class II meiotic crossing over (CO), and acts with FANCM during meiosis to repair interstrand cross-links (ICLs). The chain is Protein MHF2 homolog from Arabidopsis thaliana (Mouse-ear cress).